Consider the following 379-residue polypeptide: Origin of replication complex subunit 2 (379 aa).

The interval 1–25 (MALRGGHAAAAAGVSSGSEDDDEEA) is disordered. The span at 8–17 (AAAAAGVSSG) shows a compositional bias: low complexity.

Belongs to the ORC2 family. In terms of assembly, component of the origin recognition complex (ORC) composed of at least ORC1, ORC2, ORC3, ORC4, ORC5 and ORC6. ORC is regulated in a cell-cycle and development dependent manner. It is sequentially assembled at the exit from anaphase of mitosis and disassembled as cells enter S phase.

It localises to the nucleus. In terms of biological role, essential protein. Component of the origin recognition complex (ORC) that binds origins of replication. DNA-binding is ATP-dependent, however specific DNA sequences that define origins of replication have not been identified so far. ORC is required to assemble the pre-replication complex necessary to initiate DNA replication. This Oryza sativa subsp. indica (Rice) protein is Origin of replication complex subunit 2.